The following is a 78-amino-acid chain: Omega-conotoxin-like Ac6.5 (78 aa).

A signal peptide spans 1-22; it reads MKLTCVVIVAVLLLTACQLLTA. A propeptide spanning residues 23-42 is cleaved from the precursor; sequence DDSRGTQKHRSLRSTTKVSK. 3 disulfide bridges follow: C46-C62, C53-C65, and C61-C72. 4-hydroxyproline occurs at positions 55 and 67.

This sequence belongs to the conotoxin O1 superfamily. In terms of tissue distribution, expressed by the venom duct.

It is found in the secreted. Omega-conotoxins act at presynaptic membranes, they bind and block voltage-gated calcium channels (Cav). This chain is Omega-conotoxin-like Ac6.5, found in Conus achatinus (Little frog cone).